Here is a 130-residue protein sequence, read N- to C-terminus: Large-conductance mechanosensitive channel (130 aa).

The next 2 membrane-spanning stretches (helical) occupy residues 14–34 (IIDL…VTSF) and 73–93 (FVDF…LVKF).

It belongs to the MscL family. Homopentamer.

It is found in the cell membrane. Channel that opens in response to stretch forces in the membrane lipid bilayer. May participate in the regulation of osmotic pressure changes within the cell. The polypeptide is Large-conductance mechanosensitive channel (Oceanobacillus iheyensis (strain DSM 14371 / CIP 107618 / JCM 11309 / KCTC 3954 / HTE831)).